The chain runs to 37 residues: Large ribosomal subunit protein bL36 (37 aa).

The protein belongs to the bacterial ribosomal protein bL36 family.

The protein is Large ribosomal subunit protein bL36 of Solibacter usitatus (strain Ellin6076).